A 929-amino-acid polypeptide reads, in one-letter code: Urea transporter 2 (929 aa).

Over residues 1-11 (MSDHPLKEMSD) the composition is skewed to basic and acidic residues. Residues 1 to 89 (MSDHPLKEMS…KRRESELPRR (89 aa)) are disordered. Over residues 31 to 42 (SELSSPTWPSSS) the composition is skewed to low complexity. Basic and acidic residues predominate over residues 55–88 (PEEKDLRSSDEDSHIVKIEKPNERSKRRESELPR). The next 9 helical transmembrane spans lie at 133 to 155 (GAAQ…GLLI), 162 to 179 (IAGA…LALS), 184 to 204 (AIAS…VAVF), 212 to 232 (WWLL…SSAL), 241 to 261 (LPVF…ATGH), 310 to 330 (GGVI…HAAI), 349 to 371 (IYTG…MFYV), 378 to 399 (LLAL…NMMA), and 400 to 420 (VVGV…FLLL). The interval 451-480 (SDEQKPPNGGGGEQSHGGGQRKAEEGSETV) is disordered. Residues 458 to 470 (NGGGGEQSHGGGQ) show a composition bias toward gly residues. A Phosphoserine modification is found at S486. The next 4 membrane-spanning stretches (helical) occupy residues 609–629 (GILI…SGCL), 647–667 (AIAA…MAVF), 675–695 (WWLL…SSAL), and 704–724 (LPVF…ATGH). N742 is a glycosylation site (N-linked (GlcNAc...) asparagine). 4 consecutive transmembrane segments (helical) span residues 773 to 793 (GGIF…HAAI), 812 to 832 (IYFG…GGMF), 841 to 861 (LLAI…ANML), and 863 to 883 (VFGL…FLLL).

Belongs to the urea transporter family. Interacts with SNAPIN which enhances its urea transport activity. As to expression, expressed in the inner medulla of the kidney. In terms of tissue distribution, expressed in both the inner and outer renal medulla of the kidney.

It localises to the apical cell membrane. The protein resides in the cell membrane. The enzyme catalyses urea(in) = urea(out). Inhibited by phloretin. Activated by vasopressin, forskolin, 3-isobutyl-1-methylxanthine (IBMX) and cAMP. With respect to regulation, inhibited by phloretin. Its activity is regulated as follows. Inhibited by urea analogs and phloretin and activated by forskolin. Inhibited by phloretin and activated by forskolin. Its function is as follows. Mediates the transport of urea driven by a concentration gradient across the cell membrane of the kidney inner medullary collecting duct which is critical to the urinary concentrating mechanism. The protein is Urea transporter 2 (Slc14a2) of Rattus norvegicus (Rat).